Consider the following 829-residue polypeptide: 1,4-alpha-glucan branching enzyme GlgB (829 aa).

Catalysis depends on Asp-405, which acts as the Nucleophile. The active-site Proton donor is the Glu-458. A disordered region spans residues 758–829 (ASKATKVSTK…TTAKKTKDNA (72 aa)). Composition is skewed to low complexity over residues 778 to 789 (VKAATKSSVTKV) and 810 to 820 (VTKTAKASAKT).

It belongs to the glycosyl hydrolase 13 family. GlgB subfamily. In terms of assembly, monomer.

The catalysed reaction is Transfers a segment of a (1-&gt;4)-alpha-D-glucan chain to a primary hydroxy group in a similar glucan chain.. It functions in the pathway glycan biosynthesis; glycogen biosynthesis. Catalyzes the formation of the alpha-1,6-glucosidic linkages in glycogen by scission of a 1,4-alpha-linked oligosaccharide from growing alpha-1,4-glucan chains and the subsequent attachment of the oligosaccharide to the alpha-1,6 position. This is 1,4-alpha-glucan branching enzyme GlgB from Actinobacillus succinogenes (strain ATCC 55618 / DSM 22257 / CCUG 43843 / 130Z).